A 272-amino-acid polypeptide reads, in one-letter code: Biglycan (272 aa).

Residues 1-16 form the signal peptide; it reads MWPLWLLASLLALSQA. The propeptide occupies 17–37; it reads LPFEQKAFWDFTLDDGLPMLN. 2 O-linked (Xyl...) (glycosaminoglycan) serine glycosylation sites follow: serine 42 and serine 48. An LRRNT domain is found at 55-91; that stretch reads ALPPTFSAMCPFGCHCHLRVVQCSDLGLKAVPKEISP. Disulfide bonds link cysteine 64–cysteine 70 and cysteine 68–cysteine 77. 8 LRR repeats span residues 92–113, 116–137, 138–161, 162–183, 186–209, 210–232, 233–254, and 255–272; these read DTTLLDLQNNDISELRKDDFKG, HLYALVLVNNKISRSTRRPSAP, DGLKLNYLRISEAKLTGIPKDLPE, TLNELHLDHNKIQAIELEDLLR, KLYRLGLGHNQIRMIENGSLSFLP, TLRELHLDNNKLSRVPAGLPDLK, LLQVVYLHTNNITKVGVNDFCP, and VGFGVKRAYYNGISLFNN.

The protein belongs to the small leucine-rich proteoglycan (SLRP) family. SLRP class I subfamily. In terms of assembly, homodimer. Forms a ternary complex with MFAP2 and ELN. In terms of processing, the two attached glycosaminoglycan chains can be either chondroitin sulfate or dermatan sulfate. As to expression, found in several connective tissues, especially in articular cartilages.

The protein resides in the secreted. Its subcellular location is the extracellular space. It localises to the extracellular matrix. Functionally, may be involved in collagen fiber assembly. The protein is Biglycan (BGN) of Sus scrofa (Pig).